Consider the following 153-residue polypeptide: uncharacterized protein (153 aa).

The protein belongs to the RusA family.

This is an uncharacterized protein from Xylella fastidiosa (strain Temecula1 / ATCC 700964).